The chain runs to 224 residues: Putative homeobox protein R749 (224 aa).

The interval 139–162 (KTKTIKKSTSEKKTSPKKKTTSQQ) is disordered. The homeobox DNA-binding region spans 161-220 (QQIKRVRLSDEERNILESQYSKNNFPSPEIRDELAKKIGKTPRQVQIWFQNKRCKDRKNL).

Its subcellular location is the host nucleus. This Acanthamoeba polyphaga mimivirus (APMV) protein is Putative homeobox protein R749.